The chain runs to 21 residues: Peptidyl-prolyl cis-trans isomerase (21 aa).

Residues 1-21 (ENFKIKHTEPGLLSMANAGKN) form a disordered region.

This sequence belongs to the cyclophilin-type PPIase family. PPIase A subfamily.

The catalysed reaction is [protein]-peptidylproline (omega=180) = [protein]-peptidylproline (omega=0). Functionally, PPIases accelerate the folding of proteins. It catalyzes the cis-trans isomerization of proline imidic peptide bonds in oligopeptides. The polypeptide is Peptidyl-prolyl cis-trans isomerase (Naegleria fowleri (Brain eating amoeba)).